We begin with the raw amino-acid sequence, 525 residues long: Phospho-2-dehydro-3-deoxyheptonate aldolase 1, chloroplastic (525 aa).

A compositionally biased stretch (polar residues) spans 1 to 13 (MALSNASSLSTRS). Residues 1-35 (MALSNASSLSTRSIYGGDLSHRPSNRQSSFTFHPA) are disordered. The transit peptide at 1–52 (MALSNASSLSTRSIYGGDLSHRPSNRQSSFTFHPAVNTKPKSVNLVTAVHAA) directs the protein to the chloroplast.

It belongs to the class-II DAHP synthase family.

It localises to the plastid. Its subcellular location is the chloroplast. It carries out the reaction D-erythrose 4-phosphate + phosphoenolpyruvate + H2O = 7-phospho-2-dehydro-3-deoxy-D-arabino-heptonate + phosphate. It functions in the pathway metabolic intermediate biosynthesis; chorismate biosynthesis; chorismate from D-erythrose 4-phosphate and phosphoenolpyruvate: step 1/7. The sequence is that of Phospho-2-dehydro-3-deoxyheptonate aldolase 1, chloroplastic (DHS1) from Arabidopsis thaliana (Mouse-ear cress).